A 261-amino-acid chain; its full sequence is Small ribosomal subunit protein eS1z (261 aa).

Residues 1-18 (MAVGKNKRISKGKKGGKK) show a composition bias toward basic residues. The segment at 1 to 20 (MAVGKNKRISKGKKGGKKKA) is disordered.

It belongs to the eukaryotic ribosomal protein eS1 family. As to quaternary structure, component of the small ribosomal subunit. Mature ribosomes consist of a small (40S) and a large (60S) subunit. The 40S subunit contains about 33 different proteins and 1 molecule of RNA (18S). The 60S subunit contains about 49 different proteins and 3 molecules of RNA (25S, 5.8S and 5S).

The protein localises to the cytoplasm. This is Small ribosomal subunit protein eS1z from Vitis vinifera (Grape).